Here is a 281-residue protein sequence, read N- to C-terminus: Thioesterase PikA5 (281 aa).

Positions 26 to 249 (RLVCLPHAGG…WHEICNDISD (224 aa)) are thioesterase. The Nucleophile; for thioesterase activity role is filled by serine 99. The active-site Proton acceptor; for thioesterase activity is the histidine 233.

The protein belongs to the thioesterase family.

Its pathway is antibiotic biosynthesis. Its function is as follows. Involved in the biosynthesis of 12- and 14-membered ring macrolactone antibiotics such as methymycin, neomethymycin, narbomycin and pikromycin. Responsible for removing mis-formed acyl moieties (aberrant decarboxylation) that are bound to the PKS and could block it. Catalyzes the cleavage of methylmalonyl-[acp]. It exhibits some acyl-group specificity, and catalyzes the cleavage of propionyl and butyryl derivatives faster than acetyl malonyl or methylmalonyl derivatives. The polypeptide is Thioesterase PikA5 (Streptomyces venezuelae).